A 327-amino-acid chain; its full sequence is Tetraacyldisaccharide 4'-kinase (327 aa).

Residue 58-65 coordinates ATP; that stretch reads TVGGTGKT.

Belongs to the LpxK family.

The enzyme catalyses a lipid A disaccharide + ATP = a lipid IVA + ADP + H(+). It participates in glycolipid biosynthesis; lipid IV(A) biosynthesis; lipid IV(A) from (3R)-3-hydroxytetradecanoyl-[acyl-carrier-protein] and UDP-N-acetyl-alpha-D-glucosamine: step 6/6. Transfers the gamma-phosphate of ATP to the 4'-position of a tetraacyldisaccharide 1-phosphate intermediate (termed DS-1-P) to form tetraacyldisaccharide 1,4'-bis-phosphate (lipid IVA). The polypeptide is Tetraacyldisaccharide 4'-kinase (Alcanivorax borkumensis (strain ATCC 700651 / DSM 11573 / NCIMB 13689 / SK2)).